The sequence spans 140 residues: Large ribosomal subunit protein bL17 (140 aa).

This sequence belongs to the bacterial ribosomal protein bL17 family. As to quaternary structure, part of the 50S ribosomal subunit. Contacts protein L32.

This chain is Large ribosomal subunit protein bL17, found in Roseobacter denitrificans (strain ATCC 33942 / OCh 114) (Erythrobacter sp. (strain OCh 114)).